Here is a 470-residue protein sequence, read N- to C-terminus: Chromosomal replication initiator protein DnaA (470 aa).

The segment at 1-68 (MENFWSLCLG…SALAEEVLST (68 aa)) is domain I, interacts with DnaA modulators. The tract at residues 68-133 (TPVQIELALY…KKPKTLTETS (66 aa)) is domain II. The tract at residues 134–350 (GLNPAFRFDN…GALNRIIAMA (217 aa)) is domain III, AAA+ region. 4 residues coordinate ATP: Gly-178, Gly-180, Lys-181, and Thr-182. The domain IV, binds dsDNA stretch occupies residues 351 to 470 (NFTGHAIDVS…IAVLIQVIRD (120 aa)).

Belongs to the DnaA family. As to quaternary structure, oligomerizes as a right-handed, spiral filament on DNA at oriC.

The protein resides in the cytoplasm. Plays an essential role in the initiation and regulation of chromosomal replication. ATP-DnaA binds to the origin of replication (oriC) to initiate formation of the DNA replication initiation complex once per cell cycle. Binds the DnaA box (a 9 base pair repeat at the origin) and separates the double-stranded (ds)DNA. Forms a right-handed helical filament on oriC DNA; dsDNA binds to the exterior of the filament while single-stranded (ss)DNA is stabiized in the filament's interior. The ATP-DnaA-oriC complex binds and stabilizes one strand of the AT-rich DNA unwinding element (DUE), permitting loading of DNA polymerase. After initiation quickly degrades to an ADP-DnaA complex that is not apt for DNA replication. Binds acidic phospholipids. The protein is Chromosomal replication initiator protein DnaA of Methylobacillus flagellatus (strain ATCC 51484 / DSM 6875 / VKM B-1610 / KT).